The primary structure comprises 162 residues: 2-C-methyl-D-erythritol 2,4-cyclodiphosphate synthase (162 aa).

A divalent metal cation is bound by residues Asp9 and His11. 4-CDP-2-C-methyl-D-erythritol 2-phosphate-binding positions include 9–11 and 37–38; these read DFH and HS. Residue His45 coordinates a divalent metal cation. Residues 59-61, 64-68, 135-138, and Arg145 contribute to the 4-CDP-2-C-methyl-D-erythritol 2-phosphate site; these read DIG, FPDTD, and TTSE.

The protein belongs to the IspF family. In terms of assembly, homotrimer. A divalent metal cation is required as a cofactor.

It catalyses the reaction 4-CDP-2-C-methyl-D-erythritol 2-phosphate = 2-C-methyl-D-erythritol 2,4-cyclic diphosphate + CMP. It participates in isoprenoid biosynthesis; isopentenyl diphosphate biosynthesis via DXP pathway; isopentenyl diphosphate from 1-deoxy-D-xylulose 5-phosphate: step 4/6. Involved in the biosynthesis of isopentenyl diphosphate (IPP) and dimethylallyl diphosphate (DMAPP), two major building blocks of isoprenoid compounds. Catalyzes the conversion of 4-diphosphocytidyl-2-C-methyl-D-erythritol 2-phosphate (CDP-ME2P) to 2-C-methyl-D-erythritol 2,4-cyclodiphosphate (ME-CPP) with a corresponding release of cytidine 5-monophosphate (CMP). The sequence is that of 2-C-methyl-D-erythritol 2,4-cyclodiphosphate synthase from Leptospira biflexa serovar Patoc (strain Patoc 1 / Ames).